A 360-amino-acid polypeptide reads, in one-letter code: Protein Wnt-2 (360 aa).

The N-terminal stretch at 1–25 is a signal peptide; it reads MNAPLGGIWLGLPLLLTWLSPEVSS. 11 disulfide bridges follow: cysteine 76–cysteine 87, cysteine 127–cysteine 135, cysteine 137–cysteine 157, cysteine 206–cysteine 220, cysteine 208–cysteine 215, cysteine 278–cysteine 309, cysteine 294–cysteine 304, cysteine 308–cysteine 348, cysteine 324–cysteine 339, cysteine 326–cysteine 336, and cysteine 331–cysteine 332. Serine 212 is lipidated: O-palmitoleoyl serine; by PORCN. Residue asparagine 295 is glycosylated (N-linked (GlcNAc...) asparagine).

Belongs to the Wnt family. In terms of processing, palmitoleoylation is required for efficient binding to frizzled receptors. Depalmitoleoylation leads to Wnt signaling pathway inhibition.

It is found in the secreted. The protein localises to the extracellular space. Its subcellular location is the extracellular matrix. Ligand for members of the frizzled family of seven transmembrane receptors. Probable developmental protein. May be a signaling molecule which affects the development of discrete regions of tissues. Is likely to signal over only few cell diameters. The protein is Protein Wnt-2 (WNT2) of Oryctolagus cuniculus (Rabbit).